The following is a 1235-amino-acid chain: ATP-dependent helicase/nuclease subunit A (1235 aa).

The 471-residue stretch at 12 to 482 (SLWTDDQWKA…IDLSQNFRSR (471 aa)) folds into the UvrD-like helicase ATP-binding domain. An ATP-binding site is contributed by 33 to 40 (AAAGSGKT). The UvrD-like helicase C-terminal domain maps to 509-800 (AAELTLGANF…RMMTIHASKG (292 aa)).

This sequence belongs to the helicase family. AddA subfamily. As to quaternary structure, heterodimer of AddA and AddB/RexB. Mg(2+) serves as cofactor.

The catalysed reaction is Couples ATP hydrolysis with the unwinding of duplex DNA by translocating in the 3'-5' direction.. It carries out the reaction ATP + H2O = ADP + phosphate + H(+). Its function is as follows. The heterodimer acts as both an ATP-dependent DNA helicase and an ATP-dependent, dual-direction single-stranded exonuclease. Recognizes the chi site generating a DNA molecule suitable for the initiation of homologous recombination. The AddA nuclease domain is required for chi fragment generation; this subunit has the helicase and 3' -&gt; 5' nuclease activities. This chain is ATP-dependent helicase/nuclease subunit A, found in Listeria monocytogenes serovar 1/2a (strain ATCC BAA-679 / EGD-e).